Consider the following 710-residue polypeptide: Chloride channel protein CLC-e (710 aa).

A run of 12 helical transmembrane segments spans residues 74 to 94 (ELAI…VVLF), 122 to 142 (IGSN…VVSI), 164 to 184 (VKAV…LGTG), 193 to 213 (SVEI…KSPQ), 222 to 242 (GSAA…FFAV), 261 to 281 (TTSM…IGLG), 296 to 316 (PGEL…SLAL), 340 to 360 (VFPV…PEVL), 379 to 399 (GLSA…TAWC), 412 to 432 (SLFI…LALA), 451 to 471 (GLVG…TAVL), and 472 to 492 (LLFE…AVGM). The segment at 500–534 (QSKRQETRETKETRKRKSQEAVQSLTSSDDESSTN) is disordered. A compositionally biased stretch (basic and acidic residues) spans 502–511 (KRQETRETKE). A compositionally biased stretch (polar residues) spans 520–534 (AVQSLTSSDDESSTN). CBS domains lie at 565-624 (MRTR…GNNR) and 640-702 (KCKV…ATRM). Residues 667–687 (HVAVVSGSIDAPRIHPVGVLD) traverse the membrane as a helical segment.

It belongs to the chloride channel (TC 2.A.49) family. Homodimer.

It localises to the membrane. It carries out the reaction 2 chloride(in) + H(+)(out) = 2 chloride(out) + H(+)(in). Its function is as follows. Voltage-gated thylakoid chloride (Cl) channel/transporter involved in chloride homeostasis after transition from light to dark. Influences chloroplast ultrastructure and subsequent photosynthetic electron transport. During photosynthetic response on transition from dark to low light, involved in a sequential mechanism of adaptation; VCCN1 and CLCe first trigger the activation of photoprotection, which is later down-regulated by KEA3 to a low steady state, while adjusting electron transport. Regulates photosynthesis by a pH-independent mechanism likely involving Cl(-) homeostasis. The protein is Chloride channel protein CLC-e of Arabidopsis thaliana (Mouse-ear cress).